The chain runs to 573 residues: Phosphoenolpyruvate-protein phosphotransferase (573 aa).

His-190 serves as the catalytic Tele-phosphohistidine intermediate. Positions 297 and 333 each coordinate phosphoenolpyruvate. Residues Glu-432 and Asp-456 each coordinate Mg(2+). Residues 455 to 456 (ND) and Arg-466 each bind phosphoenolpyruvate. Catalysis depends on Cys-503, which acts as the Proton donor.

The protein belongs to the PEP-utilizing enzyme family. As to quaternary structure, homodimer. The cofactor is Mg(2+).

The protein resides in the cytoplasm. It carries out the reaction L-histidyl-[protein] + phosphoenolpyruvate = N(pros)-phospho-L-histidyl-[protein] + pyruvate. General (non sugar-specific) component of the phosphoenolpyruvate-dependent sugar phosphotransferase system (sugar PTS). This major carbohydrate active-transport system catalyzes the phosphorylation of incoming sugar substrates concomitantly with their translocation across the cell membrane. Enzyme I transfers the phosphoryl group from phosphoenolpyruvate (PEP) to the phosphoryl carrier protein (HPr). The polypeptide is Phosphoenolpyruvate-protein phosphotransferase (ptsI) (Priestia megaterium (Bacillus megaterium)).